The primary structure comprises 386 residues: MSFPADSVGLVTPQKFQFEEPLHLECGRVLPRFELMVETYGTLNADKSNAILICHALSGHHHAAGYHHEDDKKAGWWDSCIGPGKAIDTNKFFVVALNNIGGCSGSTGPTSPNPENDNRPYGPDFPLVTVRDWVKTQAMLSDRLGISVWYAVVGGSLGGMQALQWSVDYPDRLQKCVVIASAPKLSAQNIAFNEVARQSILSDPDFHHGRYLENDSYPKRGLILARMVGHITYLSEEAMKQKFGRDLKSGKFMYGFDVEFQVESYLRYQGEQFSRNFDANTYLIMTKALDYFDPSREYGHSLTEAMSKTKCQFLIVSFTTDWRFAPSRSQEIVDALITNHKPVSYLDIDAEQGHDSFLFPIPLYVKTLRAFLGGEEHLKSTSLEAS.

The 310-residue stretch at 49 to 358 folds into the AB hydrolase-1 domain; the sequence is NAILICHALS…DAEQGHDSFL (310 aa). The active-site Nucleophile is the serine 156. Substrate is bound at residue arginine 226. Residues aspartate 321 and histidine 354 contribute to the active site. Position 355 (aspartate 355) interacts with substrate.

It belongs to the AB hydrolase superfamily. MetX family. As to quaternary structure, homodimer.

It is found in the cytoplasm. It catalyses the reaction L-homoserine + succinyl-CoA = O-succinyl-L-homoserine + CoA. It functions in the pathway amino-acid biosynthesis; L-methionine biosynthesis via de novo pathway; O-succinyl-L-homoserine from L-homoserine: step 1/1. Transfers a succinyl group from succinyl-CoA to L-homoserine, forming succinyl-L-homoserine. This is Homoserine O-succinyltransferase from Acinetobacter baumannii (strain ACICU).